Here is a 478-residue protein sequence, read N- to C-terminus: Histidine--tRNA ligase (478 aa).

The protein belongs to the class-II aminoacyl-tRNA synthetase family. As to quaternary structure, homodimer.

It is found in the cytoplasm. The enzyme catalyses tRNA(His) + L-histidine + ATP = L-histidyl-tRNA(His) + AMP + diphosphate + H(+). The polypeptide is Histidine--tRNA ligase (hisS) (Xanthomonas axonopodis pv. citri (strain 306)).